The primary structure comprises 630 residues: 1-deoxy-D-xylulose-5-phosphate synthase (630 aa).

Residues histidine 87 and glycine 128–serine 130 each bind thiamine diphosphate. Position 159 (aspartate 159) interacts with Mg(2+). Residues glycine 160–alanine 161, asparagine 188, phenylalanine 295, and glutamate 377 each bind thiamine diphosphate. Asparagine 188 contributes to the Mg(2+) binding site.

Belongs to the transketolase family. DXPS subfamily. As to quaternary structure, homodimer. Requires Mg(2+) as cofactor. Thiamine diphosphate serves as cofactor.

It carries out the reaction D-glyceraldehyde 3-phosphate + pyruvate + H(+) = 1-deoxy-D-xylulose 5-phosphate + CO2. It functions in the pathway metabolic intermediate biosynthesis; 1-deoxy-D-xylulose 5-phosphate biosynthesis; 1-deoxy-D-xylulose 5-phosphate from D-glyceraldehyde 3-phosphate and pyruvate: step 1/1. In terms of biological role, catalyzes the acyloin condensation reaction between C atoms 2 and 3 of pyruvate and glyceraldehyde 3-phosphate to yield 1-deoxy-D-xylulose-5-phosphate (DXP). In Pseudomonas savastanoi pv. phaseolicola (strain 1448A / Race 6) (Pseudomonas syringae pv. phaseolicola (strain 1448A / Race 6)), this protein is 1-deoxy-D-xylulose-5-phosphate synthase.